We begin with the raw amino-acid sequence, 118 residues long: Holo-[acyl-carrier-protein] synthase (118 aa).

Residues D8 and E50 each coordinate Mg(2+).

This sequence belongs to the P-Pant transferase superfamily. AcpS family. Mg(2+) is required as a cofactor.

Its subcellular location is the cytoplasm. The enzyme catalyses apo-[ACP] + CoA = holo-[ACP] + adenosine 3',5'-bisphosphate + H(+). In terms of biological role, transfers the 4'-phosphopantetheine moiety from coenzyme A to a Ser of acyl-carrier-protein. The sequence is that of Holo-[acyl-carrier-protein] synthase from Leifsonia xyli subsp. xyli (strain CTCB07).